Here is a 73-residue protein sequence, read N- to C-terminus: Disintegrin trigramin-gamma (73 aa).

In terms of domain architecture, Disintegrin spans 1–73 (EAGEDCDCGS…AGCPRNPLHA (73 aa)). Intrachain disulfides connect C6/C21, C8/C16, C15/C38, C29/C35, C34/C59, and C47/C66. The Cell attachment site signature appears at 51-53 (RGD).

This sequence belongs to the venom metalloproteinase (M12B) family. P-II subfamily. P-IIa sub-subfamily. As to quaternary structure, monomer (disintegrin). As to expression, expressed by the venom gland.

The protein resides in the secreted. Functionally, inhibits fibrinogen interaction with platelets. Acts by binding to alpha-IIb/beta-3 (ITGA2B/ITGB3) on the platelet surface and inhibits aggregation induced by ADP, thrombin, platelet-activating factor and collagen. This is Disintegrin trigramin-gamma from Craspedocephalus gramineus (Bamboo pit viper).